A 551-amino-acid chain; its full sequence is Chaperonin GroEL (551 aa).

Residues 30 to 33, Lys51, 87 to 91, Gly415, 479 to 481, and Asp495 each bind ATP; these read TLGP, DGTTT, and NAA.

The protein belongs to the chaperonin (HSP60) family. In terms of assembly, forms a cylinder of 14 subunits composed of two heptameric rings stacked back-to-back. Interacts with the co-chaperonin GroES.

Its subcellular location is the cytoplasm. The catalysed reaction is ATP + H2O + a folded polypeptide = ADP + phosphate + an unfolded polypeptide.. Together with its co-chaperonin GroES, plays an essential role in assisting protein folding. The GroEL-GroES system forms a nano-cage that allows encapsulation of the non-native substrate proteins and provides a physical environment optimized to promote and accelerate protein folding. This Acidithiobacillus ferrooxidans (strain ATCC 23270 / DSM 14882 / CIP 104768 / NCIMB 8455) (Ferrobacillus ferrooxidans (strain ATCC 23270)) protein is Chaperonin GroEL.